The following is a 129-amino-acid chain: Small ribosomal subunit protein uS11 (129 aa).

Belongs to the universal ribosomal protein uS11 family. Part of the 30S ribosomal subunit. Interacts with proteins S7 and S18. Binds to IF-3.

Located on the platform of the 30S subunit, it bridges several disparate RNA helices of the 16S rRNA. Forms part of the Shine-Dalgarno cleft in the 70S ribosome. This Rhodopseudomonas palustris (strain BisB5) protein is Small ribosomal subunit protein uS11.